The chain runs to 457 residues: Argininosuccinate lyase (457 aa).

This sequence belongs to the lyase 1 family. Argininosuccinate lyase subfamily.

The protein localises to the cytoplasm. The enzyme catalyses 2-(N(omega)-L-arginino)succinate = fumarate + L-arginine. Its pathway is amino-acid biosynthesis; L-arginine biosynthesis; L-arginine from L-ornithine and carbamoyl phosphate: step 3/3. In Psychrobacter arcticus (strain DSM 17307 / VKM B-2377 / 273-4), this protein is Argininosuccinate lyase.